The sequence spans 349 residues: N-acetyltaurine hydrolase (349 aa).

His26, His28, Glu169, His201, His230, and Asp298 together coordinate a divalent metal cation.

Belongs to the metallo-dependent hydrolases superfamily. Phosphotriesterase family. Requires a divalent metal cation as cofactor. As to expression, expressed primarily in proximal tubules of the kidney.

It localises to the cytoplasm. Its subcellular location is the cytosol. The catalysed reaction is N-acetyltaurine + H2O = taurine + acetate. It catalyses the reaction N-propanoyltaurine + H2O = propanoate + taurine. It carries out the reaction N-acetyl-L-methionine + H2O = L-methionine + acetate. The enzyme catalyses N-acetyl-L-isoleucine + H2O = L-isoleucine + acetate. The catalysed reaction is N-acetyl-L-leucine + H2O = L-leucine + acetate. It catalyses the reaction N-acetyl-L-valine + H2O = L-valine + acetate. Its function is as follows. N-acetyltaurine hydrolase that regulates feeding by catalyzing the hydrolysis of N-acetyltaurine into taurine and acetate. N-acetyltaurine has anorexigenic and anti-obesity effects that are dependent on GFRAL receptor and GDF15. PTER also acts on other N-acetyl amino acids (Met, Ile, Leu, Val) and N-propionyltaurine, but at lower rates. Binds resiniferotoxin, a vanilloid that desensitizes nociceptive neurons. In Rattus norvegicus (Rat), this protein is N-acetyltaurine hydrolase.